We begin with the raw amino-acid sequence, 71 residues long: uncharacterized protein (71 aa).

A helical membrane pass occupies residues 5-22; sequence VVMCSGLFCSVFAGAFML.

It localises to the membrane. This is an uncharacterized protein from Bacillus subtilis (strain 168).